Consider the following 131-residue polypeptide: Small ribosomal subunit protein uS9c (131 aa).

Belongs to the universal ribosomal protein uS9 family.

Its subcellular location is the plastid. It localises to the chloroplast. The polypeptide is Small ribosomal subunit protein uS9c (rps9) (Emiliania huxleyi (Coccolithophore)).